Consider the following 318-residue polypeptide: Mitochondrial thiamine pyrophosphate carrier 1 (318 aa).

Helical transmembrane passes span 12–28, 91–107, 125–141, 181–197, 221–237, and 284–301; these read GTRR…GLVS, LMYV…YRTT, SFVA…ASTY, GCSA…GLFF, AAGV…VFPL, and GLTV…VTMW. 3 Solcar repeats span residues 12–110, 120–206, and 214–309; these read GTRR…TTQA, PPPA…LRPV, and PFGS…SLHY.

The protein belongs to the mitochondrial carrier (TC 2.A.29) family.

Its subcellular location is the mitochondrion inner membrane. Mitochondrial transporter that mediates uptake of thiamine pyrophosphate (ThPP) into mitochondria. This Aspergillus oryzae (strain ATCC 42149 / RIB 40) (Yellow koji mold) protein is Mitochondrial thiamine pyrophosphate carrier 1 (tpc1).